A 217-amino-acid polypeptide reads, in one-letter code: tRNA (guanine-N(7)-)-methyltransferase (217 aa).

Residues E44, E69, D96, and D118 each contribute to the S-adenosyl-L-methionine site. D118 is a catalytic residue. Substrate contacts are provided by residues K122, D154, and 191–194 (TEYE).

The protein belongs to the class I-like SAM-binding methyltransferase superfamily. TrmB family.

It carries out the reaction guanosine(46) in tRNA + S-adenosyl-L-methionine = N(7)-methylguanosine(46) in tRNA + S-adenosyl-L-homocysteine. Its pathway is tRNA modification; N(7)-methylguanine-tRNA biosynthesis. In terms of biological role, catalyzes the formation of N(7)-methylguanine at position 46 (m7G46) in tRNA. The sequence is that of tRNA (guanine-N(7)-)-methyltransferase from Bacillus cytotoxicus (strain DSM 22905 / CIP 110041 / 391-98 / NVH 391-98).